A 228-amino-acid polypeptide reads, in one-letter code: Cytochrome c oxidase subunit 2 (228 aa).

The Mitochondrial intermembrane portion of the chain corresponds to 1–26; that stretch reads MTTWANMNLQDSASPIMEQLIYFHDH. The helical transmembrane segment at 27–48 threads the bilayer; the sequence is ALMIIIMILMVVSYMMIAMVFN. Topologically, residues 49–62 are mitochondrial matrix; the sequence is KYINRFLLEGQMIE. The helical transmembrane segment at 63-82 threads the bilayer; the sequence is LAWTIAPAVILIFIAVPSLR. Residues 83-228 are Mitochondrial intermembrane-facing; the sequence is LLYLMDEINT…FINWILKMNM (146 aa). Cu cation contacts are provided by H161, C196, E198, C200, H204, and M207. Residue E198 coordinates Mg(2+).

Belongs to the cytochrome c oxidase subunit 2 family. As to quaternary structure, component of the cytochrome c oxidase (complex IV, CIV), a multisubunit enzyme composed of a catalytic core of 3 subunits and several supernumerary subunits. The complex exists as a monomer or a dimer and forms supercomplexes (SCs) in the inner mitochondrial membrane with ubiquinol-cytochrome c oxidoreductase (cytochrome b-c1 complex, complex III, CIII). Cu cation serves as cofactor.

The protein localises to the mitochondrion inner membrane. The catalysed reaction is 4 Fe(II)-[cytochrome c] + O2 + 8 H(+)(in) = 4 Fe(III)-[cytochrome c] + 2 H2O + 4 H(+)(out). Component of the cytochrome c oxidase, the last enzyme in the mitochondrial electron transport chain which drives oxidative phosphorylation. The respiratory chain contains 3 multisubunit complexes succinate dehydrogenase (complex II, CII), ubiquinol-cytochrome c oxidoreductase (cytochrome b-c1 complex, complex III, CIII) and cytochrome c oxidase (complex IV, CIV), that cooperate to transfer electrons derived from NADH and succinate to molecular oxygen, creating an electrochemical gradient over the inner membrane that drives transmembrane transport and the ATP synthase. Cytochrome c oxidase is the component of the respiratory chain that catalyzes the reduction of oxygen to water. Electrons originating from reduced cytochrome c in the intermembrane space (IMS) are transferred via the dinuclear copper A center (CU(A)) of subunit 2 and heme A of subunit 1 to the active site in subunit 1, a binuclear center (BNC) formed by heme A3 and copper B (CU(B)). The BNC reduces molecular oxygen to 2 water molecules using 4 electrons from cytochrome c in the IMS and 4 protons from the mitochondrial matrix. This is Cytochrome c oxidase subunit 2 (COII) from Periplaneta americana (American cockroach).